The following is a 173-amino-acid chain: Putative phosphoesterase GWCH70_0799 (173 aa).

Catalysis depends on H34, which acts as the Proton donor. 2 consecutive short sequence motifs (HXTX) follow at residues 34–37 (HLTL) and 115–118 (HITI). H115 (proton acceptor) is an active-site residue.

The protein belongs to the 2H phosphoesterase superfamily. YjcG family.

The chain is Putative phosphoesterase GWCH70_0799 from Geobacillus sp. (strain WCH70).